Here is a 50-residue protein sequence, read N- to C-terminus: MAETINKSGRGVNVCKRCGRKQGLVRKYDIYLCRHCFREIAHDMGFEKYS.

Cysteine 15, cysteine 18, cysteine 33, and cysteine 36 together coordinate Zn(2+).

The protein belongs to the universal ribosomal protein uS14 family. Zinc-binding uS14 subfamily. Part of the 30S ribosomal subunit. Zn(2+) is required as a cofactor.

Binds 16S rRNA, required for the assembly of 30S particles. In Methanosarcina barkeri (strain Fusaro / DSM 804), this protein is Small ribosomal subunit protein uS14.